Consider the following 259-residue polypeptide: UPF0758 protein Bphyt_3148 (259 aa).

An MPN domain is found at 137-259; that stretch reads LLNSPEAVEN…VYSFARAGWP (123 aa). Residues His208, His210, and Asp221 each coordinate Zn(2+). Residues 208 to 221 carry the JAMM motif motif; sequence HNHPSGAVQPSASD.

This sequence belongs to the UPF0758 family.

This chain is UPF0758 protein Bphyt_3148, found in Paraburkholderia phytofirmans (strain DSM 17436 / LMG 22146 / PsJN) (Burkholderia phytofirmans).